Here is a 377-residue protein sequence, read N- to C-terminus: Probable riboflavin import permease protein RfuC (377 aa).

The next 10 membrane-spanning stretches (helical) occupy residues Val4–Leu24, Ala49–Lys69, Met72–Leu92, Val98–Leu118, Ile135–Val155, Phe182–Phe202, Phe223–Leu245, Phe249–Tyr268, Ala274–Met294, and Leu303–Ile323.

This sequence belongs to the binding-protein-dependent transport system permease family. In terms of assembly, the complex is probably composed of two ATP-binding proteins (RfuB), two transmembrane proteins (RfuC and RfuD) and a solute-binding protein (RfuA).

It localises to the cell inner membrane. In terms of biological role, probably part of the ABC transporter complex RfuABCD involved in riboflavin import. Probably responsible for the translocation of the substrate across the membrane. The protein is Probable riboflavin import permease protein RfuC of Treponema pallidum (strain Nichols).